Consider the following 490-residue polypeptide: Cytochrome P450 2C9 (490 aa).

C435 contacts heme.

This sequence belongs to the cytochrome P450 family. Requires heme as cofactor.

The protein localises to the endoplasmic reticulum membrane. The protein resides in the microsome membrane. It carries out the reaction an organic molecule + reduced [NADPH--hemoprotein reductase] + O2 = an alcohol + oxidized [NADPH--hemoprotein reductase] + H2O + H(+). The enzyme catalyses (5Z,8Z,11Z,14Z)-eicosatetraenoate + reduced [NADPH--hemoprotein reductase] + O2 = (8R,9S)-epoxy-(5Z,11Z,14Z)-eicosatrienoate + oxidized [NADPH--hemoprotein reductase] + H2O + H(+). The catalysed reaction is (5Z,8Z,11Z,14Z)-eicosatetraenoate + reduced [NADPH--hemoprotein reductase] + O2 = (8S,9R)-epoxy-(5Z,11Z,14Z)-eicosatrienoate + oxidized [NADPH--hemoprotein reductase] + H2O + H(+). It catalyses the reaction (5Z,8Z,11Z,14Z)-eicosatetraenoate + reduced [NADPH--hemoprotein reductase] + O2 = (11R,12S)-epoxy-(5Z,8Z,14Z)-eicosatrienoate + oxidized [NADPH--hemoprotein reductase] + H2O + H(+). It carries out the reaction (5Z,8Z,11Z,14Z)-eicosatetraenoate + reduced [NADPH--hemoprotein reductase] + O2 = (11S,12R)-epoxy-(5Z,8Z,14Z)-eicosatrienoate + oxidized [NADPH--hemoprotein reductase] + H2O + H(+). The enzyme catalyses (5Z,8Z,11Z,14Z)-eicosatetraenoate + reduced [NADPH--hemoprotein reductase] + O2 = (14R,15S)-epoxy-(5Z,8Z,11Z)-eicosatrienoate + oxidized [NADPH--hemoprotein reductase] + H2O + H(+). The catalysed reaction is (5Z,8Z,11Z,14Z)-eicosatetraenoate + reduced [NADPH--hemoprotein reductase] + O2 = (14S,15R)-epoxy-(5Z,8Z,11Z)-eicosatrienoate + oxidized [NADPH--hemoprotein reductase] + H2O + H(+). It catalyses the reaction (5Z,8Z,11Z,14Z,17Z)-eicosapentaenoate + reduced [NADPH--hemoprotein reductase] + O2 = 8,9-epoxy-(5Z,11Z,14Z,17Z)-eicosatetraenoate + oxidized [NADPH--hemoprotein reductase] + H2O + H(+). It carries out the reaction (5Z,8Z,11Z,14Z,17Z)-eicosapentaenoate + reduced [NADPH--hemoprotein reductase] + O2 = 11,12-epoxy-(5Z,8Z,14Z,17Z)-eicosatetraenoate + oxidized [NADPH--hemoprotein reductase] + H2O + H(+). The enzyme catalyses (5Z,8Z,11Z,14Z,17Z)-eicosapentaenoate + reduced [NADPH--hemoprotein reductase] + O2 = 14,15-epoxy-(5Z,8Z,11Z,17Z)-eicosatetraenoate + oxidized [NADPH--hemoprotein reductase] + H2O + H(+). The catalysed reaction is (5Z,8Z,11Z,14Z,17Z)-eicosapentaenoate + reduced [NADPH--hemoprotein reductase] + O2 = (17R,18S)-epoxy-(5Z,8Z,11Z,14Z)-eicosatetraenoate + oxidized [NADPH--hemoprotein reductase] + H2O + H(+). It catalyses the reaction cholesterol + reduced [NADPH--hemoprotein reductase] + O2 = 25-hydroxycholesterol + oxidized [NADPH--hemoprotein reductase] + H2O + H(+). It carries out the reaction 17beta-estradiol + reduced [NADPH--hemoprotein reductase] + O2 = 2-hydroxy-17beta-estradiol + oxidized [NADPH--hemoprotein reductase] + H2O + H(+). The enzyme catalyses estrone + reduced [NADPH--hemoprotein reductase] + O2 = 2-hydroxyestrone + oxidized [NADPH--hemoprotein reductase] + H2O + H(+). The catalysed reaction is (5Z,8Z,11Z,14Z)-eicosatetraenoate + reduced [NADPH--hemoprotein reductase] + O2 = (11R)-hydroxy-(5Z,8Z,12E,14Z)-eicosatetraenoate + oxidized [NADPH--hemoprotein reductase] + H2O + H(+). It catalyses the reaction (5Z,8Z,11Z,14Z)-eicosatetraenoate + reduced [NADPH--hemoprotein reductase] + O2 = (12R)-hydroxy-(5Z,8Z,10E,14Z)-eicosatetraenoate + oxidized [NADPH--hemoprotein reductase] + H2O + H(+). It carries out the reaction (5Z,8Z,11Z,14Z)-eicosatetraenoate + reduced [NADPH--hemoprotein reductase] + O2 = (15R)-hydroxy-(5Z,8Z,11Z,13E)-eicosatetraenoate + oxidized [NADPH--hemoprotein reductase] + H2O + H(+). The enzyme catalyses (5Z,8Z,11Z,14Z)-eicosatetraenoate + reduced [NADPH--hemoprotein reductase] + O2 = 10-hydroxy-(5Z,8Z,11Z,14Z)-eicosatetraenoate + oxidized [NADPH--hemoprotein reductase] + H2O + H(+). The catalysed reaction is (9Z,12Z)-octadecadienoate + reduced [NADPH--hemoprotein reductase] + O2 = (13R)-hydroxy-(9Z,11E)-octadecadienoate + oxidized [NADPH--hemoprotein reductase] + H2O + H(+). It catalyses the reaction (9Z,12Z)-octadecadienoate + reduced [NADPH--hemoprotein reductase] + O2 = (9R)-hydroxy-(10E,12Z)-octadecadienoate + oxidized [NADPH--hemoprotein reductase] + H2O + H(+). It carries out the reaction (5Z,8Z,11Z,14Z)-eicosatetraenoate + reduced [NADPH--hemoprotein reductase] + O2 = 19-hydroxy-(5Z,8Z,11Z,14Z)-eicosatetraenoate + oxidized [NADPH--hemoprotein reductase] + H2O + H(+). The enzyme catalyses (5Z,8Z,11Z,14Z)-eicosatetraenoate + reduced [NADPH--hemoprotein reductase] + O2 = 13(S)-hydroxy-(5Z,8Z,11Z,14Z)-eicosatetraenoate + oxidized [NADPH--hemoprotein reductase] + H2O + H(+). The catalysed reaction is (5Z,8Z,11Z,14Z)-eicosatetraenoate + reduced [NADPH--hemoprotein reductase] + O2 = 14,15-epoxy-(5Z,8Z,11Z)-eicosatrienoate + oxidized [NADPH--hemoprotein reductase] + H2O + H(+). It catalyses the reaction (5Z,8Z,11Z,14Z)-eicosatetraenoate + reduced [NADPH--hemoprotein reductase] + O2 = 11,12-epoxy-(5Z,8Z,14Z)-eicosatrienoate + oxidized [NADPH--hemoprotein reductase] + H2O + H(+). It carries out the reaction (5Z,8Z,11Z,14Z)-eicosatetraenoate + reduced [NADPH--hemoprotein reductase] + O2 = 13-hydroxy-(5Z,8Z,11Z,14Z)-eicosatetraenoate + oxidized [NADPH--hemoprotein reductase] + H2O + H(+). The enzyme catalyses (4R)-limonene + reduced [NADPH--hemoprotein reductase] + O2 = (1R,5S)-carveol + oxidized [NADPH--hemoprotein reductase] + H2O + H(+). The catalysed reaction is (4S)-limonene + reduced [NADPH--hemoprotein reductase] + O2 = (1S,5R)-carveol + oxidized [NADPH--hemoprotein reductase] + H2O + H(+). It catalyses the reaction (4S)-limonene + reduced [NADPH--hemoprotein reductase] + O2 = (4S)-perillyl alcohol + oxidized [NADPH--hemoprotein reductase] + H2O + H(+). It participates in lipid metabolism; arachidonate metabolism. It functions in the pathway steroid metabolism; cholesterol metabolism. The protein operates within terpene metabolism; (4R)-limonene degradation. Its function is as follows. A cytochrome P450 monooxygenase involved in the metabolism of various endogenous substrates, including fatty acids and steroids. Mechanistically, uses molecular oxygen inserting one oxygen atom into a substrate, and reducing the second into a water molecule, with two electrons provided by NADPH via cytochrome P450 reductase (NADPH--hemoprotein reductase). Catalyzes the epoxidation of double bonds of polyunsaturated fatty acids (PUFA). Catalyzes the hydroxylation of carbon-hydrogen bonds. Metabolizes cholesterol toward 25-hydroxycholesterol, a physiological regulator of cellular cholesterol homeostasis. Exhibits low catalytic activity for the formation of catechol estrogens from 17beta-estradiol (E2) and estrone (E1), namely 2-hydroxy E1 and E2. Catalyzes bisallylic hydroxylation and hydroxylation with double-bond migration of polyunsaturated fatty acids (PUFA). Also metabolizes plant monoterpenes such as limonene. Oxygenates (R)- and (S)-limonene to produce carveol and perillyl alcohol. Contributes to the wide pharmacokinetics variability of the metabolism of drugs such as S-warfarin, diclofenac, phenytoin, tolbutamide and losartan. The polypeptide is Cytochrome P450 2C9 (Homo sapiens (Human)).